We begin with the raw amino-acid sequence, 348 residues long: MSTIEEQLKALREETLTSLKQITAGNEKEMQDLRVSVLGKKGSLTEILKGMKDVSAEMRPIIGKHVNEARDVLTAAFEETAKLLEEKKVAAQLASESIDVTLPGRPVATGHRHVLTQTSEEIEDIFIGMGYQVVDGFEVEQDYYNFERMNLPKDHPARDMQDTFYITEEILLRTHTSPVQARAMDAHDFSKGPLKMISPGRVFRRDTDDATHSHQFHQIEGLVVGKNISMADLQGTLQLIVQKMFGEERQIRLRPSYFPFTEPSVEVDVSCFKCGGEGCNVCKKTGWIEIMGAGMVHPRVLEMSGIDATVYSGFAFGLGQERVAMLRYGINDIRGFYQGDVRFSEQFK.

Position 262 (Glu262) interacts with Mg(2+).

It belongs to the class-II aminoacyl-tRNA synthetase family. Phe-tRNA synthetase alpha subunit type 1 subfamily. Tetramer of two alpha and two beta subunits. Mg(2+) is required as a cofactor.

Its subcellular location is the cytoplasm. It carries out the reaction tRNA(Phe) + L-phenylalanine + ATP = L-phenylalanyl-tRNA(Phe) + AMP + diphosphate + H(+). This is Phenylalanine--tRNA ligase alpha subunit from Streptococcus pneumoniae serotype 2 (strain D39 / NCTC 7466).